A 578-amino-acid polypeptide reads, in one-letter code: Hemolysin 4 (578 aa).

The segment at 289-322 (KDGPKASWRRRPSSASSVTMPTTPRIIGSNARPE) is disordered. In terms of domain architecture, Ricin B-type lectin spans 448-539 (RPVNLQLGGF…LSNLSAHQLL (92 aa)).

This sequence belongs to the HlyA hemolysin family.

In terms of biological role, bacterial hemolysins are exotoxins that attack blood cell membranes and cause cell rupture by mechanisms not clearly defined. In Aeromonas salmonicida, this protein is Hemolysin 4 (ash4).